Consider the following 511-residue polypeptide: MPAPHGGILQDLIARDALKKNELLSEAQSSDILVWNLTPRQLCDIELILNGGFSPLTGFLNENDYSSVVTDSRLADGTLWTIPITLDVDEAFANQIKPDTRIALFQDDEIPIAILTVQDVYKPNKTIEAEKVFRGDPEHPAISYLFNVAGDYYVGGSLEAIQLPQHYDYPGLRKTPAQLRLEFQSRQWDRVVAFQTRNPMHRAHRELTVRAAREANAKVLIHPVVGLTKPGDIDHHTRVRVYQEIIKRYPNGIAFLSLLPLAMRMSGDREAVWHAIIRKNYGASHFIVGRDHAGPGKNSKGVDFYGPYDAQELVESYKHELDIEVVPFRMVTYLPDEDRYAPIDQIDTTKTRTLNISGTELRRRLRVGGEIPEWFSYPEVVKILRESNPPRPKQGFSIVLGNSLTVSREQLSIALLSTFLQFGGGRYYKIFEHNNKTELLSLIQDFIGSGSGLIIPNQWEDDKDSVVGKQNVYLLDTSSSADIQLESADEPISHIVQKVVLFLEDNGFFVF.

Residues 1–167 (MPAPHGGILQ…LEAIQLPQHY (167 aa)) are N-terminal. A catalytic region spans residues 168–393 (DYPGLRKTPA…LRESNPPRPK (226 aa)). Sulfate is bound at residue Gln-195. ATP contacts are provided by residues 195–198 (QTRN) and 289–292 (GRDH). Active-site residues include Thr-196, Arg-197, and Asn-198. Position 197 (Arg-197) interacts with sulfate. Residue Ala-293 coordinates sulfate. Val-331 is an ATP binding site. The interval 394 to 511 (QGFSIVLGNS…FLEDNGFFVF (118 aa)) is required for oligomerization; adenylyl-sulfate kinase-like.

This sequence belongs to the sulfate adenylyltransferase family. In terms of assembly, homohexamer. Dimer of trimers.

The protein resides in the cytoplasm. It catalyses the reaction sulfate + ATP + H(+) = adenosine 5'-phosphosulfate + diphosphate. Its pathway is sulfur metabolism; hydrogen sulfide biosynthesis; sulfite from sulfate: step 1/3. In terms of biological role, catalyzes the first intracellular reaction of sulfate assimilation, forming adenosine-5'-phosphosulfate (APS) from inorganic sulfate and ATP. Plays an important role in sulfate activation as a component of the biosynthesis pathway of sulfur-containing amino acids. The protein is Sulfate adenylyltransferase of Saccharomyces cerevisiae (strain ATCC 204508 / S288c) (Baker's yeast).